Here is a 118-residue protein sequence, read N- to C-terminus: UPF0102 protein Arth_2474 (118 aa).

The protein belongs to the UPF0102 family.

The protein is UPF0102 protein Arth_2474 of Arthrobacter sp. (strain FB24).